Consider the following 295-residue polypeptide: Phosphatidylserine decarboxylase proenzyme (295 aa).

Catalysis depends on charge relay system; for autoendoproteolytic cleavage activity residues Asp113, His169, and Ser256. The active-site Schiff-base intermediate with substrate; via pyruvic acid; for decarboxylase activity is the Ser256. At Ser256 the chain carries Pyruvic acid (Ser); by autocatalysis.

This sequence belongs to the phosphatidylserine decarboxylase family. PSD-B subfamily. Prokaryotic type II sub-subfamily. As to quaternary structure, heterodimer of a large membrane-associated beta subunit and a small pyruvoyl-containing alpha subunit. Requires pyruvate as cofactor. Is synthesized initially as an inactive proenzyme. Formation of the active enzyme involves a self-maturation process in which the active site pyruvoyl group is generated from an internal serine residue via an autocatalytic post-translational modification. Two non-identical subunits are generated from the proenzyme in this reaction, and the pyruvate is formed at the N-terminus of the alpha chain, which is derived from the carboxyl end of the proenzyme. The autoendoproteolytic cleavage occurs by a canonical serine protease mechanism, in which the side chain hydroxyl group of the serine supplies its oxygen atom to form the C-terminus of the beta chain, while the remainder of the serine residue undergoes an oxidative deamination to produce ammonia and the pyruvoyl prosthetic group on the alpha chain. During this reaction, the Ser that is part of the protease active site of the proenzyme becomes the pyruvoyl prosthetic group, which constitutes an essential element of the active site of the mature decarboxylase.

The protein localises to the cell membrane. The catalysed reaction is a 1,2-diacyl-sn-glycero-3-phospho-L-serine + H(+) = a 1,2-diacyl-sn-glycero-3-phosphoethanolamine + CO2. The protein operates within phospholipid metabolism; phosphatidylethanolamine biosynthesis; phosphatidylethanolamine from CDP-diacylglycerol: step 2/2. In terms of biological role, catalyzes the formation of phosphatidylethanolamine (PtdEtn) from phosphatidylserine (PtdSer). This Clostridium botulinum (strain Langeland / NCTC 10281 / Type F) protein is Phosphatidylserine decarboxylase proenzyme.